Consider the following 178-residue polypeptide: Translation initiation factor IF-3 (178 aa).

Positions 1–20 (MRRPFKTDAPVKDGPRSNRE) are disordered.

This sequence belongs to the IF-3 family. As to quaternary structure, monomer.

The protein localises to the cytoplasm. Functionally, IF-3 binds to the 30S ribosomal subunit and shifts the equilibrium between 70S ribosomes and their 50S and 30S subunits in favor of the free subunits, thus enhancing the availability of 30S subunits on which protein synthesis initiation begins. This Rhizobium leguminosarum bv. trifolii (strain WSM2304) protein is Translation initiation factor IF-3.